The sequence spans 260 residues: uncharacterized protein (260 aa).

Residues 1–38 (MNWTREIEQYKQVVASYKLKMKRMEMKISDISEEKRQS) are a coiled coil.

This is an uncharacterized protein from Caenorhabditis elegans.